The primary structure comprises 76 residues: MENKLSFEEAISQLEHLVSKLEQGDVPLEEAISYFKEGMELSKLCDEKLKNVQEQMAVILGEDGELEPFTALGDEA.

This sequence belongs to the XseB family. Heterooligomer composed of large and small subunits.

It localises to the cytoplasm. The catalysed reaction is Exonucleolytic cleavage in either 5'- to 3'- or 3'- to 5'-direction to yield nucleoside 5'-phosphates.. Functionally, bidirectionally degrades single-stranded DNA into large acid-insoluble oligonucleotides, which are then degraded further into small acid-soluble oligonucleotides. The protein is Exodeoxyribonuclease 7 small subunit of Bacillus cereus (strain ATCC 14579 / DSM 31 / CCUG 7414 / JCM 2152 / NBRC 15305 / NCIMB 9373 / NCTC 2599 / NRRL B-3711).